The chain runs to 967 residues: Aminopeptidase N (967 aa).

Over 2 to 8 (AKGFYIS) the chain is Cytoplasmic. Residues 9–32 (KSLGILGILLGVAAVCTIIALSVV) traverse the membrane as a helical; Signal-anchor for type II membrane protein segment. The tract at residues 33 to 68 (YSQEKNKNANSSPVASTTPSASATTNPASATTLDQS) is cytosolic Ser/Thr-rich junction. Topologically, residues 33 to 967 (YSQEKNKNAN…VLQWFTENSK (935 aa)) are extracellular. The interval 40–62 (NANSSPVASTTPSASATTNPASA) is disordered. The segment covering 41–62 (ANSSPVASTTPSASATTNPASA) has biased composition (low complexity). The metalloprotease stretch occupies residues 69 to 967 (KAWNRYRLPN…VLQWFTENSK (899 aa)). Asparagine 128 carries an N-linked (GlcNAc...) asparagine glycan. Sulfotyrosine is present on tyrosine 176. Asparagine 234 and asparagine 265 each carry an N-linked (GlcNAc...) asparagine glycan. Residues 288 to 295 (DYVEKQAS) are necessary and sufficient to mediate interaction with HCoV-229E. Asparagine 319 carries N-linked (GlcNAc...) asparagine glycosylation. Position 352–356 (352–356 (GAMEN)) interacts with substrate. Histidine 388 lines the Zn(2+) pocket. Catalysis depends on glutamate 389, which acts as the Proton acceptor. Residues histidine 392 and glutamate 411 each contribute to the Zn(2+) site. 2 positions are modified to sulfotyrosine: tyrosine 419 and tyrosine 424. Asparagine 527, asparagine 573, asparagine 625, asparagine 681, and asparagine 735 each carry an N-linked (GlcNAc...) asparagine glycan. 2 cysteine pairs are disulfide-bonded: cysteine 761/cysteine 768 and cysteine 798/cysteine 834. Asparagine 818 carries an N-linked (GlcNAc...) asparagine glycan. Position 913 is a sulfotyrosine (tyrosine 913).

The protein belongs to the peptidase M1 family. As to quaternary structure, homodimer. Interacts with SLC6A19. (Microbial infection) Interacts with the S1 domain of human coronavirus 229E/HCoV-229E spike protein. Requires Zn(2+) as cofactor. Sulfated. In terms of processing, N- and O-glycosylated. Post-translationally, may undergo proteolysis and give rise to a soluble form. Expressed in epithelial cells of the kidney, intestine, and respiratory tract; granulocytes, monocytes, fibroblasts, endothelial cells, cerebral pericytes at the blood-brain barrier, synaptic membranes of cells in the CNS. Also expressed in endometrial stromal cells, but not in the endometrial glandular cells. Found in the vasculature of tissues that undergo angiogenesis and in malignant gliomas and lymph node metastases from multiple tumor types but not in blood vessels of normal tissues. A soluble form has been found in plasma. It is found to be elevated in plasma and effusions of cancer patients.

It is found in the cell membrane. It carries out the reaction Release of an N-terminal amino acid, Xaa-|-Yaa- from a peptide, amide or arylamide. Xaa is preferably Ala, but may be most amino acids including Pro (slow action). When a terminal hydrophobic residue is followed by a prolyl residue, the two may be released as an intact Xaa-Pro dipeptide.. In terms of biological role, broad specificity aminopeptidase which plays a role in the final digestion of peptides generated from hydrolysis of proteins by gastric and pancreatic proteases. Also involved in the processing of various peptides including peptide hormones, such as angiotensin III and IV, neuropeptides, and chemokines. May also be involved the cleavage of peptides bound to major histocompatibility complex class II molecules of antigen presenting cells. May have a role in angiogenesis and promote cholesterol crystallization. May have a role in amino acid transport by acting as binding partner of amino acid transporter SLC6A19 and regulating its activity. (Microbial infection) Acts as a receptor for human coronavirus 229E/HCoV-229E. In case of human coronavirus 229E (HCoV-229E) infection, serves as receptor for HCoV-229E spike glycoprotein. Functionally, (Microbial infection) Mediates as well Human cytomegalovirus (HCMV) infection. This Homo sapiens (Human) protein is Aminopeptidase N (ANPEP).